The sequence spans 31 residues: Chassatide C5 (31 aa).

The cyclopeptide (Gly-Asn) cross-link spans 1 to 31 (GVIPCGESCVFIPCISSVVGCSCKNKVCYRN). 3 disulfides stabilise this stretch: C5–C21, C9–C23, and C14–C28.

Post-translationally, this is a cyclic peptide. In terms of tissue distribution, expressed in pedicel, root and stem but not in leaf and fruit (at protein level).

Functionally, probably participates in a plant defense mechanism. This Chassalia chartacea (Chassalia curviflora) protein is Chassatide C5.